We begin with the raw amino-acid sequence, 750 residues long: Phosphoribosylformylglycinamidine synthase subunit PurL (750 aa).

The active site involves histidine 54. Residues tyrosine 57 and lysine 101 each coordinate ATP. Mg(2+) is bound at residue glutamate 103. Substrate-binding positions include 104–107 (SHNH) and arginine 126. Histidine 105 (proton acceptor) is an active-site residue. A Mg(2+)-binding site is contributed by aspartate 127. Glutamine 251 is a binding site for substrate. Residue aspartate 279 coordinates Mg(2+). Position 323–325 (323–325 (ESQ)) interacts with substrate. Aspartate 509 and glycine 546 together coordinate ATP. Position 547 (asparagine 547) interacts with Mg(2+). Serine 549 provides a ligand contact to substrate.

It belongs to the FGAMS family. Monomer. Part of the FGAM synthase complex composed of 1 PurL, 1 PurQ and 2 PurS subunits.

The protein resides in the cytoplasm. It catalyses the reaction N(2)-formyl-N(1)-(5-phospho-beta-D-ribosyl)glycinamide + L-glutamine + ATP + H2O = 2-formamido-N(1)-(5-O-phospho-beta-D-ribosyl)acetamidine + L-glutamate + ADP + phosphate + H(+). The protein operates within purine metabolism; IMP biosynthesis via de novo pathway; 5-amino-1-(5-phospho-D-ribosyl)imidazole from N(2)-formyl-N(1)-(5-phospho-D-ribosyl)glycinamide: step 1/2. Functionally, part of the phosphoribosylformylglycinamidine synthase complex involved in the purines biosynthetic pathway. Catalyzes the ATP-dependent conversion of formylglycinamide ribonucleotide (FGAR) and glutamine to yield formylglycinamidine ribonucleotide (FGAM) and glutamate. The FGAM synthase complex is composed of three subunits. PurQ produces an ammonia molecule by converting glutamine to glutamate. PurL transfers the ammonia molecule to FGAR to form FGAM in an ATP-dependent manner. PurS interacts with PurQ and PurL and is thought to assist in the transfer of the ammonia molecule from PurQ to PurL. This is Phosphoribosylformylglycinamidine synthase subunit PurL from Cutibacterium acnes (strain DSM 16379 / KPA171202) (Propionibacterium acnes).